The sequence spans 512 residues: Polyamine aminopropyltransferase (512 aa).

7 helical membrane-spanning segments follow: residues 19–39, 48–68, 76–96, 108–128, 151–171, 172–192, and 199–219; these read IVSI…SYIL, LTIS…EKFM, VWIE…MFGI, YLYS…PILI, AGGL…FGMV, KTAF…LWLF, and FIVH…GLFF. The PABS domain occupies 215–450; the sequence is AGLFFGEEMA…GNWGFVMASR (236 aa). Residues 217–457 are spermidine synthase; it reads LFFGEEMAFN…ASREEIDLDI (241 aa). S-methyl-5'-thioadenosine is bound at residue Gln-245. Residues His-275 and Asp-299 each coordinate spermidine. S-methyl-5'-thioadenosine is bound by residues Asp-319 and 353-354; that span reads DA. The active-site Proton acceptor is Asp-371.

The protein belongs to the spermidine/spermine synthase family. As to quaternary structure, homodimer or homotetramer.

It is found in the cell membrane. It catalyses the reaction S-adenosyl 3-(methylsulfanyl)propylamine + putrescine = S-methyl-5'-thioadenosine + spermidine + H(+). The protein operates within amine and polyamine biosynthesis; spermidine biosynthesis; spermidine from putrescine: step 1/1. Functionally, catalyzes the irreversible transfer of a propylamine group from the amino donor S-adenosylmethioninamine (decarboxy-AdoMet) to putrescine (1,4-diaminobutane) to yield spermidine. In Oceanobacillus iheyensis (strain DSM 14371 / CIP 107618 / JCM 11309 / KCTC 3954 / HTE831), this protein is Polyamine aminopropyltransferase.